We begin with the raw amino-acid sequence, 1286 residues long: ABC transporter B family member 4 (1286 aa).

A disordered region spans residues 1–39 (MASESGLNGDPNILEEVSETKRDKEEEEEVKKTEKKDEE). Basic and acidic residues predominate over residues 18–39 (SETKRDKEEEEEVKKTEKKDEE). A helical membrane pass occupies residues 60–80 (FLLMILGTLGSIGNGLGFPLM). One can recognise an ABC transmembrane type-1 1 domain in the interval 63-349 (MILGTLGSIG…TSPCLSAFAA (287 aa)). Residues Asn-94 and Asn-97 are each glycosylated (N-linked (GlcNAc...) asparagine). A run of 5 helical transmembrane segments spans residues 109-129 (FVWLGIGTFAAAFLQLSGWMI), 186-206 (IQLLATFVGGFVIAFVRGWLL), 208-228 (LVMLSSIPLLVMAGALLAIVI), 288-308 (GLGLGTLFLVVFCSYALAVWY), and 317-337 (GYTGGQVLNIIIAVLTGSMSL). The ABC transporter 1 domain occupies 384 to 620 (IELKDVYFTY…PEGAYSQLIR (237 aa)). 419–426 (GQSGSGKS) lines the ATP pocket. Asn-500 and Asn-571 each carry an N-linked (GlcNAc...) asparagine glycan. Residues 625–636 (KKSDENAAEEQK) are compositionally biased toward basic and acidic residues. The tract at residues 625–669 (KKSDENAAEEQKMSSIESFKQSSLRKSSLGRSLSKGGSSRGNSSR) is disordered. A compositionally biased stretch (low complexity) spans 646-669 (SSLRKSSLGRSLSKGGSSRGNSSR). A glycan (N-linked (GlcNAc...) asparagine) is linked at Asn-666. Ser-671 is subject to Phosphoserine. In terms of domain architecture, ABC transmembrane type-1 2 spans 720-1007 (LILGSISAAA…SSSLSPDSSK (288 aa)). The next 2 helical transmembrane spans lie at 721 to 741 (ILGSISAAANGVILPIFGILI) and 764 to 784 (IIFMVLGFASIIAYPAQTFFF). 2 N-linked (GlcNAc...) asparagine glycosylation sites follow: Asn-816 and Asn-846. Helical transmembrane passes span 850 to 870 (ILAGLIIAFLACWQLAFVVLA), 871 to 891 (MLPLIALNGFLYMKFMKGFSA), 942 to 962 (GIVSGIGFGFSFFVLFSSYAA), and 976 to 996 (TTFDSVFRVFFALTMAAMAIS). One can recognise an ABC transporter 2 domain in the interval 1042–1279 (IELRHVSFKY…KDGVYASLVQ (238 aa)). 1077–1084 (GESGSGKS) contacts ATP. Residues Asn-1131 and Asn-1230 are each glycosylated (N-linked (GlcNAc...) asparagine).

It belongs to the ABC transporter superfamily. ABCB family. Multidrug resistance exporter (TC 3.A.1.201) subfamily. As to quaternary structure, interacts with 1-naphthylphthalamic acid (NPA). Phosphorylation level varies significantly during early response to bacterial elicitor. As to expression, mostly expressed in roots, especially in the root elongation zone and lateral roots. In mature portion of the root, expressed in the epidermis and cortex. In the root elongation zone, confined to epidermis. In root tips, present in the root cap, S3 columella and epidermal cells.

The protein resides in the cell membrane. In terms of biological role, auxin influx transporter that mediates the transport of auxin in roots. Contributes to the basipetal transport in hypocotyls and root tips by establishing an auxin uptake sink in the root cap. Confers sensitivity to 1-N-naphthylphthalamic acid (NPA). Regulates the root elongation, the initiation of lateral roots and the development of root hairs. Can transport IAA, indole-3-propionic acid, NPA syringic acid, vanillic acid and some auxin metabolites, but not 2,4-D and 1-naphthaleneacetic acid. The protein is ABC transporter B family member 4 (ABCB4) of Arabidopsis thaliana (Mouse-ear cress).